We begin with the raw amino-acid sequence, 725 residues long: Aminopeptidase RNPEPL1 (725 aa).

Residue 326-330 coordinates substrate; that stretch reads VAMEN. Histidine 353 contacts Zn(2+). Glutamate 354 (proton acceptor) is an active-site residue. 2 residues coordinate Zn(2+): histidine 357 and glutamate 376. Residues 676 to 699 form a disordered region; it reads GLGSSTEPASEPSTELGKAEADTD. Positions 679 to 690 are enriched in low complexity; that stretch reads SSTEPASEPSTE.

The protein belongs to the peptidase M1 family. It depends on Zn(2+) as a cofactor. In terms of tissue distribution, ubiquitously expressed. Expressed at relatively higher levels in heart and skeletal muscle.

The enzyme catalyses Release of N-terminal amino acids, preferentially methionine, from peptides and arylamides.. Its activity is regulated as follows. Inhibited by calcium but not affected by chloride ions. Inhibited by amastatin and to a lower extent by bestatin. Weakly inhibited by puromycin. Its function is as follows. Broad specificity aminopeptidase which preferentially hydrolyzes an N-terminal methionine, citrulline or glutamine. The sequence is that of Aminopeptidase RNPEPL1 from Homo sapiens (Human).